The sequence spans 858 residues: Bifunctional uridylyltransferase/uridylyl-removing enzyme (858 aa).

Positions 1-324 (MSAHAAPSPE…PATSGITRVL (324 aa)) are uridylyltransferase. Residues 325-681 (SADRFVEKQG…ARPSPIGDAL (357 aa)) form a uridylyl-removing region. Residues 443 to 565 (VDQHILMVLR…VGNERYLTAL (123 aa)) enclose the HD domain. ACT domains are found at residues 682-763 (QVLV…PSKG) and 790-858 (ILSV…AIAV).

This sequence belongs to the GlnD family. It depends on Mg(2+) as a cofactor.

The catalysed reaction is [protein-PII]-L-tyrosine + UTP = [protein-PII]-uridylyl-L-tyrosine + diphosphate. It carries out the reaction [protein-PII]-uridylyl-L-tyrosine + H2O = [protein-PII]-L-tyrosine + UMP + H(+). Uridylyltransferase (UTase) activity is inhibited by glutamine, while glutamine activates uridylyl-removing (UR) activity. Modifies, by uridylylation and deuridylylation, the PII regulatory proteins (GlnB and homologs), in response to the nitrogen status of the cell that GlnD senses through the glutamine level. Under low glutamine levels, catalyzes the conversion of the PII proteins and UTP to PII-UMP and PPi, while under higher glutamine levels, GlnD hydrolyzes PII-UMP to PII and UMP (deuridylylation). Thus, controls uridylylation state and activity of the PII proteins, and plays an important role in the regulation of nitrogen assimilation and metabolism. The polypeptide is Bifunctional uridylyltransferase/uridylyl-removing enzyme (Burkholderia orbicola (strain MC0-3)).